A 251-amino-acid polypeptide reads, in one-letter code: Flap endonuclease Xni (251 aa).

Aspartate 104 contributes to the Mg(2+) binding site. Positions 160 to 249 constitute a 5'-3' exonuclease domain; sequence VQPQQLPDYW…IDGNLQQLRL (90 aa). Residues leucine 171, alanine 172, proline 180, valine 182, and isoleucine 185 each coordinate K(+). Positions 184-189 are interaction with DNA; that stretch reads GIGPKS.

This sequence belongs to the Xni family. The cofactor is Mg(2+). It depends on K(+) as a cofactor.

Has flap endonuclease activity. During DNA replication, flap endonucleases cleave the 5'-overhanging flap structure that is generated by displacement synthesis when DNA polymerase encounters the 5'-end of a downstream Okazaki fragment. In Escherichia coli O17:K52:H18 (strain UMN026 / ExPEC), this protein is Flap endonuclease Xni.